Consider the following 323-residue polypeptide: Lipoyl synthase (323 aa).

[4Fe-4S] cluster-binding residues include C56, C61, C67, C82, C86, C89, and S293. Residues 68–282 (WEDREATFLI…AAEARELGFA (215 aa)) enclose the Radical SAM core domain.

The protein belongs to the radical SAM superfamily. Lipoyl synthase family. [4Fe-4S] cluster is required as a cofactor.

The protein localises to the cytoplasm. The enzyme catalyses [[Fe-S] cluster scaffold protein carrying a second [4Fe-4S](2+) cluster] + N(6)-octanoyl-L-lysyl-[protein] + 2 oxidized [2Fe-2S]-[ferredoxin] + 2 S-adenosyl-L-methionine + 4 H(+) = [[Fe-S] cluster scaffold protein] + N(6)-[(R)-dihydrolipoyl]-L-lysyl-[protein] + 4 Fe(3+) + 2 hydrogen sulfide + 2 5'-deoxyadenosine + 2 L-methionine + 2 reduced [2Fe-2S]-[ferredoxin]. The protein operates within protein modification; protein lipoylation via endogenous pathway; protein N(6)-(lipoyl)lysine from octanoyl-[acyl-carrier-protein]: step 2/2. Functionally, catalyzes the radical-mediated insertion of two sulfur atoms into the C-6 and C-8 positions of the octanoyl moiety bound to the lipoyl domains of lipoate-dependent enzymes, thereby converting the octanoylated domains into lipoylated derivatives. The protein is Lipoyl synthase of Acidothermus cellulolyticus (strain ATCC 43068 / DSM 8971 / 11B).